Here is a 1134-residue protein sequence, read N- to C-terminus: MWSLLLLAALVGQGFALKNVFDMRIQCPHSANFGETSVSGYTELPPLSLQEAEQLVPESSCNMDNHQSLSTINKLTKVVWRKKANQESANQNSFEVVESEVSFKGLCMLKHRMVEESYRNRRSVICYDLACNSTFCKPTVYMIVPKHACNMMKSCLIGLVPYRIQVVYERTYCTTGILTEGKCFVPDKAVVSALKRGMYAIASIETICFFIHQKGNTYKIVTAITSAMGSKCNNTDTKVQGYYICIIGGNSAPVYAPAGEDFRAMEVFSGIITSPHGEDHDLPAEEIATYQISGQIEAKIPHTVSSKNLKLIAFAGIPSYSSTSILAASEDGRFIFSPGLFPNLNQSVCDNNALPLIWRGLIDLTGYYEAVHPCNVFCVLSGPGASCEAFSEGGIFNITSPMCLVSKQNRFRAAEQQISFICQRVDMDIIVYCNGQKKTILTKTLVMASAFILLQVSFHCYQGLPIAIAIELCVPGFHGWATAALLITFCFGWVLIPACTLAILLVLKFFANILHTSNQENRFKAILRKIKEEFEKTKGSMGCEICKYECETLKELKAHNLSCVQGECPYCFTHCEPTETATQAHYKVCQATHRFREDLKKTVTPKKYWARLYRTLNLFRYKSRCYILTMWTLLLIIESILWAASAAEIPLVPLWTDNAHGVGSVPMHRNTYELDFSFPSSSKYTYKRHLTNPVNDQQSVSLHIEIESQGIGADVHHLGHWYDARLNLKTSFHCYGACTKYQYPWHTAKCHFEKDYEYENSWACNPPDCPGVGTGCTACGLYLDQLKPVATPFRIISVRYSRKVCVQFGEEYLCKTIDMNDCFVTRHAKICIIGTVSKFSQGDTLLFLGPMEGGGIIFKHWCTSTCHFGDPGDVMGPKDKPFICPEFPGQFRKKCNFATTPICEYDGNIISGYKKVLATIDSFQSFNTSNIHFTDERIEWRDPDGMLRDHINIVISKDIDFENLAENPCKVGLQAANIEGAWGSGVGFTLTCQVSLTECPTFLTSIKACDMAICYGAESVTLSRGQNTVRITGKGGHSGSSFKCCHGKECSSTGLQASAPHLDKVNGISELENEKVYDDGAPECGVTCWFKKSGEWVMGIINGNWVVLIVLCVLLLFSLILLSILCPVRKHKKS.

The signal sequence occupies residues Met1 to Ala16. Residues Leu17–Ala484 lie on the Lumenal side of the membrane. Intrachain disulfides connect Cys27–Cys149, Cys61–Cys155, Cys107–Cys126, Cys131–Cys136, Cys173–Cys183, Cys208–Cys245, Cys232–Cys349, Cys374–Cys433, Cys378–Cys387, and Cys403–Cys422. N-linked (GlcNAc...) asparagine; by host glycosylation occurs at Asn132. Asn233 and Asn345 each carry an N-linked (GlcNAc...) asparagine; by host glycan. N-linked (GlcNAc...) asparagine; by host glycosylation occurs at Asn397. Residues Leu485 to Leu504 form a helical membrane-spanning segment. Over Leu505–Tyr626 the chain is Cytoplasmic. Residues Leu514–Lys531 form a binding to the ribonucleoprotein region. 2 CCHC-type zinc fingers span residues Cys543–Cys563 and Cys568–Cys589. 3 binding to the ribonucleoprotein regions span residues Tyr586–Val603, Gln590–Lys601, and Trp609–Ser623. In terms of domain architecture, ITAM spans Trp609–Thr632. Positions Tyr613–Leu616 match the YxxL motif. The chain crosses the membrane as a helical span at residues Ile627–Ala647. The Lumenal segment spans residues Glu648–Trp1105. 8 disulfide bridges follow: Cys734–Cys769, Cys738–Cys776, Cys750–Cys884, Cys764–Cys895, Cys779–Cys903, Cys805–Cys814, Cys822–Cys831, and Cys862–Cys866. The interval Tyr756–Cys776 is fusion loop. N-linked (GlcNAc...) asparagine; by host glycosylation is present at Asn927. 5 disulfides stabilise this stretch: Cys969-Cys999, Cys992-Cys1044, Cys1009-Cys1014, Cys1045-Cys1050, and Cys1084-Cys1088. The helical transmembrane segment at Val1106–Leu1125 threads the bilayer. Residues Leu1121–Ser1134 form a binding to the ribonucleoprotein region. The Cytoplasmic segment spans residues Cys1126–Ser1134.

The protein belongs to the hantavirus envelope glycoprotein family. Homodimer. Homotetramer; forms heterotetrameric Gn-Gc spikes in the pre-fusion conformation. Interacts (via C-terminus) with the nucleoprotein. Interacts with host TUFM; this interaction contributes to the virus-induced degradation of mitochondria by autophagy, which leads to degradation of host MAVS and inhibition of type I interferon (IFN) responses. Interacts with host MAP1LC3B; this interaction contributes to the virus-induced degradation of mitochondria by autophagy, which leads to degradation of host MAVS and inhibition of type I interferon (IFN) responses. As to quaternary structure, homodimer. Homotetramer; forms heterotetrameric Gn-Gc spikes in the pre-fusion conformation. Homotrimer; forms homotrimer in the post-fusion conformation at acidic pH. Interacts (via C-terminus) with the nucleoprotein. In terms of processing, envelope polyprotein precursor is quickly cleaved in vivo just after synthesis, presumably by host signal peptidase.

The protein resides in the virion membrane. The protein localises to the host cell surface. Its subcellular location is the host Golgi apparatus membrane. It is found in the host endoplasmic reticulum membrane. It localises to the host mitochondrion. In terms of biological role, forms homotetramers with glycoprotein C at the surface of the virion. Attaches the virion to host cell receptors including integrin ITGAV/ITGB3. This attachment induces virion internalization predominantly through clathrin-dependent endocytosis. Mediates the assembly and budding of infectious virus particles through its interaction with the nucleocapsid protein and the viral genome. May dysregulate normal immune and endothelial cell responses through an ITAM motif. Translocates to mitochondria, binds to host TUFM and recruits MAP1LC3B. These interactions induce mitochondrial autophagy and therefore destruction of host MAVS leading to inhibition of type I interferon (IFN) responses. Concomitant breakdown of glycoprotein N is apparently prevented by the nucleoprotein that may inhibit Gn-stimulated autophagosome-lysosome fusion. Interacts with the viral genomic RNA. Functionally, forms homotetramers with glycoprotein N at the surface of the virion. Attaches the virion to host cell receptors including integrin ITGAV/ITGB3. This attachment induces virion internalization predominantly through clathrin-dependent endocytosis. Class II fusion protein that promotes fusion of viral membrane with host endosomal membrane after endocytosis of the virion. In Homo sapiens (Human), this protein is Envelopment polyprotein (GP).